Here is a 199-residue protein sequence, read N- to C-terminus: ATP-dependent Clp protease proteolytic subunit (199 aa).

Ser-102 (nucleophile) is an active-site residue. Residue His-127 is part of the active site.

Belongs to the peptidase S14 family. As to quaternary structure, component of the chloroplastic Clp protease core complex.

It is found in the plastid. It localises to the chloroplast stroma. The enzyme catalyses Hydrolysis of proteins to small peptides in the presence of ATP and magnesium. alpha-casein is the usual test substrate. In the absence of ATP, only oligopeptides shorter than five residues are hydrolyzed (such as succinyl-Leu-Tyr-|-NHMec, and Leu-Tyr-Leu-|-Tyr-Trp, in which cleavage of the -Tyr-|-Leu- and -Tyr-|-Trp bonds also occurs).. Its function is as follows. Cleaves peptides in various proteins in a process that requires ATP hydrolysis. Has a chymotrypsin-like activity. Plays a major role in the degradation of misfolded proteins. This is ATP-dependent Clp protease proteolytic subunit from Physcomitrium patens (Spreading-leaved earth moss).